We begin with the raw amino-acid sequence, 149 residues long: Regulatory protein YlbF (149 aa).

The protein localises to the cytoplasm. Its function is as follows. Regulates sporulation prior to stage II. Positively controls the competence regulator ComK at a post-transcriptional level. May modulate the translation, stability or activity of ComS. May work together with YmcA to regulate community development. The protein is Regulatory protein YlbF (ylbF) of Bacillus subtilis (strain 168).